The following is a 53-amino-acid chain: MLKFYLENVFHLIFFAKLPEAYAVSDPIVNVMPIIPLFFFLLAFVWQASVSFR.

A propeptide spanning residues Met1 to Ala16 is cleaved from the precursor. A helical transmembrane segment spans residues Ile28–Ala48.

This sequence belongs to the PsbK family. PSII is composed of 1 copy each of membrane proteins PsbA, PsbB, PsbC, PsbD, PsbE, PsbF, PsbH, PsbI, PsbJ, PsbK, PsbL, PsbM, PsbT, PsbX, PsbY, PsbZ, Psb30/Ycf12, at least 3 peripheral proteins of the oxygen-evolving complex and a large number of cofactors. It forms dimeric complexes.

The protein resides in the plastid. Its subcellular location is the chloroplast thylakoid membrane. In terms of biological role, one of the components of the core complex of photosystem II (PSII). PSII is a light-driven water:plastoquinone oxidoreductase that uses light energy to abstract electrons from H(2)O, generating O(2) and a proton gradient subsequently used for ATP formation. It consists of a core antenna complex that captures photons, and an electron transfer chain that converts photonic excitation into a charge separation. The chain is Photosystem II reaction center protein K from Huperzia lucidula (Shining clubmoss).